The primary structure comprises 257 residues: MALAKRIIPCLDVTAGRVVKGVNFVELRDAGDPVEIARRYDEQGADELTFLDITATSDQRDLILPIIEAVASQVFIPLTVGGGVRAVEDVRRLLNAGADKVSMNSSAVANPQLVRDAADKYGSQCIVVAIDAKRVSAPNEAPRWEVFTHGGRKATGLDAIEWARKMAELGAGEILLTSMDRDGTKSGFDLALTRAVSDAVPVPVIASGGVGCLQDLADGIKQGHADAVLAASIFHYGEHTVGEAKHFMADQGIAVRL.

Residues Asp12 and Asp131 contribute to the active site.

Belongs to the HisA/HisF family. In terms of assembly, heterodimer of HisH and HisF.

The protein resides in the cytoplasm. It carries out the reaction 5-[(5-phospho-1-deoxy-D-ribulos-1-ylimino)methylamino]-1-(5-phospho-beta-D-ribosyl)imidazole-4-carboxamide + L-glutamine = D-erythro-1-(imidazol-4-yl)glycerol 3-phosphate + 5-amino-1-(5-phospho-beta-D-ribosyl)imidazole-4-carboxamide + L-glutamate + H(+). The protein operates within amino-acid biosynthesis; L-histidine biosynthesis; L-histidine from 5-phospho-alpha-D-ribose 1-diphosphate: step 5/9. Its function is as follows. IGPS catalyzes the conversion of PRFAR and glutamine to IGP, AICAR and glutamate. The HisF subunit catalyzes the cyclization activity that produces IGP and AICAR from PRFAR using the ammonia provided by the HisH subunit. The chain is Imidazole glycerol phosphate synthase subunit HisF from Burkholderia vietnamiensis (strain G4 / LMG 22486) (Burkholderia cepacia (strain R1808)).